The chain runs to 85 residues: CRISPR-associated endoribonuclease Cas2 (85 aa).

Asp8 is a binding site for Mg(2+).

This sequence belongs to the CRISPR-associated endoribonuclease Cas2 protein family. Homodimer, forms a heterotetramer with a Cas1 homodimer. Requires Mg(2+) as cofactor.

CRISPR (clustered regularly interspaced short palindromic repeat), is an adaptive immune system that provides protection against mobile genetic elements (viruses, transposable elements and conjugative plasmids). CRISPR clusters contain sequences complementary to antecedent mobile elements and target invading nucleic acids. CRISPR clusters are transcribed and processed into CRISPR RNA (crRNA). Functions as a ssRNA-specific endoribonuclease. Involved in the integration of spacer DNA into the CRISPR cassette. The sequence is that of CRISPR-associated endoribonuclease Cas2 from Thermococcus kodakarensis (strain ATCC BAA-918 / JCM 12380 / KOD1) (Pyrococcus kodakaraensis (strain KOD1)).